The primary structure comprises 300 residues: Inositol polyphosphate multikinase beta (300 aa).

Ser78 bears the Phosphoserine mark.

This sequence belongs to the inositol phosphokinase (IPK) family. Interacts with KIN10 and KIN11. Phosphorylated by KIN10. Expressed in leaves, stems, roots, siliques and flowers. Detected in vascular strands, stigma cells, the abscission zones of fully elongated siliques, the root central cylinder and the root tip.

It is found in the nucleus. The catalysed reaction is 1D-myo-inositol 1,4,5-trisphosphate + 2 ATP = 1D-myo-inositol 1,3,4,5,6-pentakisphosphate + 2 ADP + 2 H(+). It catalyses the reaction 1D-myo-inositol 1,3,4,6-tetrakisphosphate + ATP = 1D-myo-inositol 1,3,4,5,6-pentakisphosphate + ADP + H(+). Down-regulated by KIN10 through its protein phosphorylation. Its function is as follows. Inositol phosphate kinase with a broad substrate specificity. Phosphorylates inositol 1,4,5-trisphosphate (Ins(1,4,5)P3), inositol 1,4,5,6-tetrakisphosphate (Ins(1,4,5,6)P4), inositol 1,3,4,5-tetrakisphosphate (Ins(1,3,4,5)P4), inositol 1,3,4,6-tetrakisphosphate (Ins(1,3,4,6)P4) and inositol 1,2,3,4,6-pentakisphosphate (Ins(1,2,3,4,6)P5) but not inositol 1,4-bisphosphate (Ins(1,4)P2), inositol 1,3,4-trisphosphate (Ins(1,3,4)P3), inositol 1,2,6-trisphosphate (Ins(1,2,6)P3), inositol 3,4,5,6-tetrakisphosphate (Ins(3,4,5,6)P4), inositol 1,3,4,5,6-pentakisphosphate (Ins(1,3,4,5,6)P5), inositol 1,2,4,5,6-pentakisphosphate (Ins(1,2,4,5,6)P5) or inositol hexakisphosphate (InsP6). Involved in the auxin signaling pathway. Regulates axillary shoot branching and is required for phytate synthesis in seeds. In Arabidopsis thaliana (Mouse-ear cress), this protein is Inositol polyphosphate multikinase beta (IPK2b).